A 402-amino-acid polypeptide reads, in one-letter code: Indole-3-glycerol phosphate synthase, chloroplastic (402 aa).

The transit peptide at 1–65 directs the protein to the chloroplast; that stretch reads MEGLVPVQRL…SDLKESLAVS (65 aa).

The protein belongs to the TrpC family. In terms of tissue distribution, expressed in leaves.

It localises to the plastid. The protein localises to the chloroplast. It catalyses the reaction 1-(2-carboxyphenylamino)-1-deoxy-D-ribulose 5-phosphate + H(+) = (1S,2R)-1-C-(indol-3-yl)glycerol 3-phosphate + CO2 + H2O. It functions in the pathway amino-acid biosynthesis; L-tryptophan biosynthesis; L-tryptophan from chorismate: step 4/5. In terms of biological role, indole-3-glycerol phosphate synthase required for tryptophan biosynthesis. The chain is Indole-3-glycerol phosphate synthase, chloroplastic from Arabidopsis thaliana (Mouse-ear cress).